We begin with the raw amino-acid sequence, 153 residues long: UPF0178 protein Sfum_1097 (153 aa).

This sequence belongs to the UPF0178 family.

The protein is UPF0178 protein Sfum_1097 of Syntrophobacter fumaroxidans (strain DSM 10017 / MPOB).